A 326-amino-acid chain; its full sequence is D-threonate 4-phosphate dehydrogenase (326 aa).

The substrate site is built by His138 and Thr139. Residues His168, His212, and His267 each coordinate a divalent metal cation. Residues Lys275, Asn284, and Arg293 each coordinate substrate.

It belongs to the PdxA family. PdxA2 subfamily. As to quaternary structure, homodimer. Requires a divalent metal cation as cofactor.

It catalyses the reaction 4-O-phospho-D-threonate + NAD(+) = dihydroxyacetone phosphate + CO2 + NADH. Functionally, catalyzes the NAD-dependent oxidation and subsequent decarboxylation of D-threonate 4-phosphate to produce dihydroxyacetone phosphate (DHAP). Can also use 4-hydroxy-L-threonine 4-phosphate as substrate. This is D-threonate 4-phosphate dehydrogenase from Pectobacterium atrosepticum (strain SCRI 1043 / ATCC BAA-672) (Erwinia carotovora subsp. atroseptica).